We begin with the raw amino-acid sequence, 313 residues long: GTP cyclohydrolase 1 (313 aa).

The span at 1–10 (MAQETTRDGS) shows a compositional bias: basic and acidic residues. The interval 1–120 (MAQETTRDGS…SRGTRERLEE (120 aa)) is disordered. Residues 11–20 (DSPSGSVSPP) are compositionally biased toward low complexity. The span at 29–39 (KDKKSSKKRAH) shows a compositional bias: basic residues. A compositionally biased stretch (basic and acidic residues) spans 40 to 64 (SSGERRSSVSKPARDPSDKPEESPS). The segment covering 72–102 (TSSTAAAAVPSTITEEVSPSTSVTRSPSPVI) has biased composition (low complexity). Zn(2+) is bound by residues C202, H205, and C273.

It belongs to the GTP cyclohydrolase I family. In terms of assembly, toroid-shaped homodecamer, composed of two pentamers of five dimers.

It carries out the reaction GTP + H2O = 7,8-dihydroneopterin 3'-triphosphate + formate + H(+). It functions in the pathway cofactor biosynthesis; 7,8-dihydroneopterin triphosphate biosynthesis; 7,8-dihydroneopterin triphosphate from GTP: step 1/1. Its activity is regulated as follows. GTP shows a positive allosteric effect, and tetrahydrobiopterin inhibits the enzyme activity. Functionally, GTP cyclohydrolase 1 is the first enzyme in the biosynthetic pathway leading to folic acid. This chain is GTP cyclohydrolase 1 (gch-1), found in Neurospora crassa (strain ATCC 24698 / 74-OR23-1A / CBS 708.71 / DSM 1257 / FGSC 987).